Here is a 557-residue protein sequence, read N- to C-terminus: Urocanate hydratase (557 aa).

The disordered stretch occupies residues 1 to 20; sequence MSNPRHNEREVRSPRGDELN. Residues 52-53, Gln130, 176-178, Glu196, Arg201, 242-243, 263-267, 273-274, and Tyr322 each bind NAD(+); these read GG, GMG, NA, QTSAH, and YL. The active site involves Cys410. Gly492 contacts NAD(+).

Belongs to the urocanase family. Requires NAD(+) as cofactor.

The protein resides in the cytoplasm. It catalyses the reaction 4-imidazolone-5-propanoate = trans-urocanate + H2O. It participates in amino-acid degradation; L-histidine degradation into L-glutamate; N-formimidoyl-L-glutamate from L-histidine: step 2/3. Its function is as follows. Catalyzes the conversion of urocanate to 4-imidazolone-5-propionate. The sequence is that of Urocanate hydratase from Brucella abortus (strain S19).